Reading from the N-terminus, the 150-residue chain is 15 kDa calcium-binding protein (150 aa).

At alanine 1 the chain carries N-acetylalanine. 4 EF-hand domains span residues 7 to 42, 43 to 78, 81 to 116, and 118 to 150; these read TDAEKAEFKFGFKSKDGDNSITAKELGEFLESAGKS, FSEEQLAQMISDVDTDKSGTIEFSEMLMGIAEKMMK, WKKSHFQKAFDDMDKDGNGVLSPEELHLAMSTRIEP, and MSKEAIDAIIAKADCDGDGKINRKEFVKLIKSS. 18 residues coordinate Ca(2+): aspartate 22, aspartate 24, serine 26, threonine 28, aspartate 56, aspartate 58, serine 60, threonine 62, glutamate 67, aspartate 94, aspartate 96, asparagine 98, glutamate 105, aspartate 131, aspartate 133, aspartate 135, lysine 137, and glutamate 142.

The protein localises to the nucleus. It is found in the cytoplasm. The protein resides in the cytoskeleton. It localises to the spindle. In terms of biological role, may play an important role in mitosis of sea urchin egg. May function as a Ca(2+)-dependent intracellular modulator of microtubule assembly. This is 15 kDa calcium-binding protein from Hemicentrotus pulcherrimus (Sea urchin).